Here is a 224-residue protein sequence, read N- to C-terminus: Perchlorate reductase assembly chaperone protein (224 aa).

It belongs to the type II DMSO reductase enzyme chaperone family.

Its subcellular location is the cytoplasm. Functionally, may function as a system-specific molybdenum chaperone protein essential for the assembly of the perchlorate reductase PcrAB complex prior to its periplasmic translocation via the Tat pathway. The chain is Perchlorate reductase assembly chaperone protein (pcrD) from Dechloromonas aromatica (strain RCB).